The primary structure comprises 384 residues: MTHASSGATFTLACELISRSSVTPDDCGCLDLIAARLAPLGFRFERVDSSGVCNLWARRGGTAPVLCFAGHTDVVPAGPLDGWDSPPFEPTVRGGQLFGRGAADMKTSIAAFVTAIERFVATHPDHVGSIALLLTSDEEGIATHGTVKVVEALAGRGERLDYCVVGEPTSVNTLGDTIKNGRRGSLSGTLRVKGVQGHVAYPQLARNPIHEFAPALAELASIRWDEGNEFFPPTTWQVSNIHAGTGANNVIPGTCEVLFNFRFASVSSADELRQRTHVVLDRHGLDYELDWHLSGKPFLTGRGKLVEALSDAIRDTVGVETELSTSGGTSDGRFIADICNEVVEFGPVNATIHKVNESVALDAIEPLSAIYERTLNALLLPNGD.

Position 71 (H71) interacts with Zn(2+). D73 is a catalytic residue. Residue D104 participates in Zn(2+) binding. E138 serves as the catalytic Proton acceptor. Zn(2+) is bound by residues E139, E167, and H353.

Belongs to the peptidase M20A family. DapE subfamily. As to quaternary structure, homodimer. The cofactor is Zn(2+). Requires Co(2+) as cofactor.

It catalyses the reaction N-succinyl-(2S,6S)-2,6-diaminopimelate + H2O = (2S,6S)-2,6-diaminopimelate + succinate. Its pathway is amino-acid biosynthesis; L-lysine biosynthesis via DAP pathway; LL-2,6-diaminopimelate from (S)-tetrahydrodipicolinate (succinylase route): step 3/3. Functionally, catalyzes the hydrolysis of N-succinyl-L,L-diaminopimelic acid (SDAP), forming succinate and LL-2,6-diaminopimelate (DAP), an intermediate involved in the bacterial biosynthesis of lysine and meso-diaminopimelic acid, an essential component of bacterial cell walls. The sequence is that of Succinyl-diaminopimelate desuccinylase from Aromatoleum aromaticum (strain DSM 19018 / LMG 30748 / EbN1) (Azoarcus sp. (strain EbN1)).